Consider the following 784-residue polypeptide: Rabenosyn-5 (784 aa).

At Ala2 the chain carries N-acetylalanine. Phosphoserine is present on Ser3. The C2H2-type zinc finger occupies 14–37; the sequence is FLCPLCLKDLQSFYQLHSHYEEEH. Positions 100-263 are necessary for the correct targeting to endosomes; that stretch reads RSHLSDFKKH…HCKDTLLKRE (164 aa). The segment at 157-260 adopts an FYVE-type zinc-finger fold; it reads DQDVPFCPDC…CCTHCKDTLL (104 aa). Residues Cys163, Cys166, Cys179, Cys182, Cys187, and Cys190 each coordinate Zn(2+). Residues 207-224 are compositionally biased toward polar residues; sequence KESLSTHTSPSQSPNSVH. The disordered stretch occupies residues 207–241; the sequence is KESLSTHTSPSQSPNSVHGSRRGSISSMSSVSSVL. Phosphoserine occurs at positions 215, 219, 226, and 230. The span at 228 to 240 shows a compositional bias: low complexity; the sequence is RGSISSMSSVSSV. Zn(2+)-binding residues include Cys252 and Cys255. The interval 264–500 is necessary for interaction with RAB4A; the sequence is QQIDEKEHTP…QLQDEYDQQQ (237 aa). Positions 264–784 are necessary for interaction with EHD1; that stretch reads QQIDEKEHTP…TLAKQKGGTD (521 aa). Coiled coils occupy residues 378 to 414 and 472 to 531; these read TKEQ…LEER and QAKA…RELE. A compositionally biased stretch (basic and acidic residues) spans 390–400; it reads KEEMERKRAVE. Positions 390–429 are disordered; the sequence is KEEMERKRAVERQAALESQRRLEERQSGLASRAANGEVAS. Positions 496 to 515 constitute a UIM domain; the sequence is YDQQQTEKAIELSRRQAEEE. The interval 574 to 732 is disordered; it reads DLGSSPVPSS…DSDSGPEAEE (159 aa). Over residues 579–598 the composition is skewed to polar residues; sequence PVPSSTAPKTPSLSSTQPTR. The interval 627–784 is necessary for interaction with RAB5A; the sequence is PFDEEDLSSP…TLAKQKGGTD (158 aa). The segment covering 663 to 673 has biased composition (acidic residues); that stretch reads PFEEEDEEEEA. Position 684 is a phosphoserine (Ser684). Residues 722 to 732 show a composition bias toward acidic residues; the sequence is MDSDSGPEAEE.

In terms of assembly, interacts with EHD1, RAB4A, RAB5A, RAB14, RAB22A, RAB24 and VPS45. Binds simultaneously to RAB4A and RAB5A in vitro. Interacts with RAB4A and RAB5A that has been activated by GTP binding.

It is found in the cell membrane. It localises to the early endosome membrane. In terms of biological role, rab4/Rab5 effector protein acting in early endocytic membrane fusion and membrane trafficking of recycling endosomes. Required for endosome fusion either homotypically or with clathrin coated vesicles. Plays a role in the lysosomal trafficking of CTSD/cathepsin D from the Golgi to lysosomes. Also promotes the recycling of transferrin directly from early endosomes to the plasma membrane. Binds phospholipid vesicles containing phosphatidylinositol 3-phosphate (PtdInsP3). Plays a role in the recycling of transferrin receptor to the plasma membrane. This Homo sapiens (Human) protein is Rabenosyn-5.